A 264-amino-acid polypeptide reads, in one-letter code: MSNRWRFVVVVTLFTYCLTFERVSTWLIRSGEPVQHPAEFPFIAFLTTERTMCTGSLVSTRAVLTAGHCVCSPLPVIRVSFLTLRNGDQQGIHHQPSGVKVAPGYMPSCMSARQRRPIAQTLSGFDIAIVMLAQMVNLQSGIRVISLPQPSDIPPPGTGVFIVGYGRDDNDRDPSRKNGGILKKGRATIMECRHATNGNPICVKAGQNFGQLPAPGDSGGPLLPSLQGPVLGVVSHGVTLPNLPDIIVEYASVARMLDFVRSNI.

Residues 1 to 19 form the signal peptide; the sequence is MSNRWRFVVVVTLFTYCLT. Positions 20 to 27 are excised as a propeptide; the sequence is FERVSTWL. The 237-residue stretch at 28–264 folds into the Peptidase S1 domain; it reads IRSGEPVQHP…RMLDFVRSNI (237 aa). A disulfide bond links Cys53 and Cys69. Catalysis depends on charge relay system residues His68 and Asp126. Cysteines 192 and 202 form a disulfide. Ser218 (charge relay system) is an active-site residue.

Belongs to the peptidase S1 family. As to expression, acetabular (penetration) glands.

With respect to regulation, activated by an autocatalytic mechanism. Its function is as follows. This protease cleaves elastin and thus facilitates penetration of schistosome parasite larvae through elastin-rich tissue of the host. This chain is Cercarial protease, found in Schistosoma mansoni (Blood fluke).